The sequence spans 504 residues: Tachykinin-like peptides receptor 86C (504 aa).

Topologically, residues 1–84 (MSEIVDTELL…PYELPWEQKT (84 aa)) are extracellular. Residues N12, N28, and N36 are each glycosylated (N-linked (GlcNAc...) asparagine). A helical transmembrane segment spans residues 85 to 108 (IWAIIFGLMMFVAIAGNGIVLWIV). Topologically, residues 109 to 118 (TGHRSMRTVT) are cytoplasmic. A helical membrane pass occupies residues 119–143 (NYFLLNLSIADLLMSSLNCVFNFIF). The Extracellular portion of the chain corresponds to 144–155 (MLNSDWPFGSIY). The chain crosses the membrane as a helical span at residues 156 to 179 (CTINNFVANVTVSTSVFTLVAISF). The Cytoplasmic segment spans residues 180-199 (DRYIAIVHPLKRRTSRRKVR). Residues 200 to 224 (IILVLIWALSCVLSAPCLLYSSIMT) traverse the membrane as a helical segment. At 225–250 (KHYYNGKSRTVCFMMWPDGRYPTSMA) the chain is on the extracellular side. Residues 251-275 (DYAYNLIILVLTYGIPMIVMLICYS) traverse the membrane as a helical segment. At 276 to 308 (LMGRVLWGSRSIGENTDRQMESMKSKRKVVRMF) the chain is on the cytoplasmic side. The chain crosses the membrane as a helical span at residues 309–330 (IAIVSIFAICWLPYHLFFIYAY). The Extracellular portion of the chain corresponds to 331–343 (HNNQVASTKYVQH). The chain crosses the membrane as a helical span at residues 344 to 367 (MYLGFYWLAMSNAMVNPLIYYWMN). At 368-504 (KRFRMYFQRI…NPVELSPKQM (137 aa)) the chain is on the cytoplasmic side. A disordered region spans residues 393–450 (PKSRLTNKNSSNRHTRAETKSQWKRSTMETQIQQAPVTSSCREQRSAQQQQPPGSGTN). Composition is skewed to polar residues over residues 395-404 (SRLTNKNSSN) and 416-450 (KRST…SGTN).

Belongs to the G-protein coupled receptor 1 family. As to expression, expressed in central nervous system, as well as in subsets of neurons in each segment of the developing ventral ganglia.

Its subcellular location is the cell membrane. In terms of biological role, receptor for tachykinin-like peptides. The polypeptide is Tachykinin-like peptides receptor 86C (TkR86C) (Drosophila melanogaster (Fruit fly)).